Consider the following 201-residue polypeptide: Ribonuclease HII (201 aa).

In terms of domain architecture, RNase H type-2 spans 15-201; sequence AIIAGVDEAG…FAPIKAYGAP (187 aa). The a divalent metal cation site is built by D21, E22, and D113.

The protein belongs to the RNase HII family. Requires Mn(2+) as cofactor. The cofactor is Mg(2+).

The protein localises to the cytoplasm. The catalysed reaction is Endonucleolytic cleavage to 5'-phosphomonoester.. In terms of biological role, endonuclease that specifically degrades the RNA of RNA-DNA hybrids. The polypeptide is Ribonuclease HII (Bordetella pertussis (strain Tohama I / ATCC BAA-589 / NCTC 13251)).